A 280-amino-acid chain; its full sequence is Negative elongation factor E (280 aa).

The span at 25–36 (KKKKKALQAHKA) shows a compositional bias: basic residues. Disordered stretches follow at residues 25–112 (KKKK…STQN) and 141–166 (RDREERGMPEKVPMDTAQPEKPRAGN). Positions 49-61 (RPTDARDAREVAR) are enriched in basic and acidic residues. Residues 73 to 83 (QKQTKQDQTSF) are compositionally biased toward polar residues. Residues 87 to 96 (KGQERAKRST) show a composition bias toward basic and acidic residues. Positions 97-112 (SETTVASYQPFSSTQN) are enriched in polar residues. Residues 141-163 (RDREERGMPEKVPMDTAQPEKPR) are compositionally biased toward basic and acidic residues. Residues 166 to 236 (NTIFVSGNKV…INLQVQLARR (71 aa)) form the RRM domain.

It belongs to the RRM NELF-E family. In terms of assembly, component of the NELF complex, which is at least composed of TH1/Nelf-D and Nelf-E.

Its subcellular location is the nucleus. It localises to the chromosome. Functionally, essential component of the NELF complex, a complex that negatively regulates the elongation of transcription by RNA polymerase II by RNA polymerase II. The NELF complex, which acts via an association with the DSIF complex, causes transcriptional pausing. The chain is Negative elongation factor E (Nelf-E) from Drosophila melanogaster (Fruit fly).